Here is a 233-residue protein sequence, read N- to C-terminus: ATP synthase subunit a (233 aa).

6 helical membrane-spanning segments follow: residues 27–47, 85–105, 114–134, 143–163, 189–209, and 210–230; these read ANFV…FAIL, YLAF…IGVV, VPSV…IVGV, LAHF…IELV, VFLK…HVFV, and SFLQ…GAVA.

The protein belongs to the ATPase A chain family. F-type ATPases have 2 components, CF(1) - the catalytic core - and CF(0) - the membrane proton channel. CF(1) has five subunits: alpha(3), beta(3), gamma(1), delta(1), epsilon(1). CF(0) has three main subunits: a(1), b(2) and c(9-12). The alpha and beta chains form an alternating ring which encloses part of the gamma chain. CF(1) is attached to CF(0) by a central stalk formed by the gamma and epsilon chains, while a peripheral stalk is formed by the delta and b chains.

Its subcellular location is the cell inner membrane. Functionally, key component of the proton channel; it plays a direct role in the translocation of protons across the membrane. The sequence is that of ATP synthase subunit a from Solibacter usitatus (strain Ellin6076).